Reading from the N-terminus, the 121-residue chain is Peptidyl-tRNA hydrolase (121 aa).

The protein belongs to the PTH2 family.

The protein resides in the cytoplasm. It catalyses the reaction an N-acyl-L-alpha-aminoacyl-tRNA + H2O = an N-acyl-L-amino acid + a tRNA + H(+). Functionally, the natural substrate for this enzyme may be peptidyl-tRNAs which drop off the ribosome during protein synthesis. The polypeptide is Peptidyl-tRNA hydrolase (Sulfurisphaera tokodaii (strain DSM 16993 / JCM 10545 / NBRC 100140 / 7) (Sulfolobus tokodaii)).